The following is a 194-amino-acid chain: Holliday junction branch migration complex subunit RuvA (194 aa).

The domain I stretch occupies residues 1–64; that stretch reads MISRLTGKLV…EDAHLLFGFA (64 aa). The tract at residues 65–143 is domain II; it reads TAEERKTFRQ…AHTVTDGLFA (79 aa). The flexible linker stretch occupies residues 144–147; sequence ASPA. The tract at residues 147-194 is domain III; sequence AADETEDIVSTLLALGYNEREAKAAVKGVPKGTDVGEGVRLALKNLLK.

The protein belongs to the RuvA family. Homotetramer. Forms an RuvA(8)-RuvB(12)-Holliday junction (HJ) complex. HJ DNA is sandwiched between 2 RuvA tetramers; dsDNA enters through RuvA and exits via RuvB. An RuvB hexamer assembles on each DNA strand where it exits the tetramer. Each RuvB hexamer is contacted by two RuvA subunits (via domain III) on 2 adjacent RuvB subunits; this complex drives branch migration. In the full resolvosome a probable DNA-RuvA(4)-RuvB(12)-RuvC(2) complex forms which resolves the HJ.

The protein resides in the cytoplasm. Functionally, the RuvA-RuvB-RuvC complex processes Holliday junction (HJ) DNA during genetic recombination and DNA repair, while the RuvA-RuvB complex plays an important role in the rescue of blocked DNA replication forks via replication fork reversal (RFR). RuvA specifically binds to HJ cruciform DNA, conferring on it an open structure. The RuvB hexamer acts as an ATP-dependent pump, pulling dsDNA into and through the RuvAB complex. HJ branch migration allows RuvC to scan DNA until it finds its consensus sequence, where it cleaves and resolves the cruciform DNA. The sequence is that of Holliday junction branch migration complex subunit RuvA from Neisseria gonorrhoeae (strain ATCC 700825 / FA 1090).